The primary structure comprises 513 residues: ATP synthase subunit alpha (513 aa).

Position 169 to 176 (169 to 176) interacts with ATP; it reads GDRQTGKT.

It belongs to the ATPase alpha/beta chains family. F-type ATPases have 2 components, CF(1) - the catalytic core - and CF(0) - the membrane proton channel. CF(1) has five subunits: alpha(3), beta(3), gamma(1), delta(1), epsilon(1). CF(0) has three main subunits: a(1), b(2) and c(9-12). The alpha and beta chains form an alternating ring which encloses part of the gamma chain. CF(1) is attached to CF(0) by a central stalk formed by the gamma and epsilon chains, while a peripheral stalk is formed by the delta and b chains.

Its subcellular location is the cell inner membrane. The enzyme catalyses ATP + H2O + 4 H(+)(in) = ADP + phosphate + 5 H(+)(out). Its function is as follows. Produces ATP from ADP in the presence of a proton gradient across the membrane. The alpha chain is a regulatory subunit. The sequence is that of ATP synthase subunit alpha from Haemophilus influenzae (strain PittGG).